A 320-amino-acid chain; its full sequence is Cytochrome f (320 aa).

The first 35 residues, 1–35 (MQNRNTFSWVKEPINRSISVLIIIYVITQTSISNA), serve as a signal peptide directing secretion. Tyr-36, Cys-56, Cys-59, and His-60 together coordinate heme. A helical membrane pass occupies residues 286–306 (VQGLLFFLASVTLAQIFLVLK).

Belongs to the cytochrome f family. In terms of assembly, the 4 large subunits of the cytochrome b6-f complex are cytochrome b6, subunit IV (17 kDa polypeptide, petD), cytochrome f and the Rieske protein, while the 4 small subunits are PetG, PetL, PetM and PetN. The complex functions as a dimer. It depends on heme as a cofactor.

It is found in the plastid. The protein resides in the chloroplast thylakoid membrane. Component of the cytochrome b6-f complex, which mediates electron transfer between photosystem II (PSII) and photosystem I (PSI), cyclic electron flow around PSI, and state transitions. This Piper cenocladum (Ant piper) protein is Cytochrome f.